Reading from the N-terminus, the 283-residue chain is Polyamine aminopropyltransferase (283 aa).

The region spanning Glu-2–Lys-237 is the PABS domain. An S-methyl-5'-thioadenosine-binding site is contributed by Gln-31. 2 residues coordinate spermidine: His-62 and Asp-86. Residues Glu-106 and Asp-137–Gly-138 contribute to the S-methyl-5'-thioadenosine site. The Proton acceptor role is filled by Asp-155. Asp-155 to Asp-158 is a binding site for spermidine. Pro-162 is a binding site for S-methyl-5'-thioadenosine.

Belongs to the spermidine/spermine synthase family. As to quaternary structure, homodimer or homotetramer.

It localises to the cytoplasm. The enzyme catalyses S-adenosyl 3-(methylsulfanyl)propylamine + putrescine = S-methyl-5'-thioadenosine + spermidine + H(+). The protein operates within amine and polyamine biosynthesis; spermidine biosynthesis; spermidine from putrescine: step 1/1. Functionally, catalyzes the irreversible transfer of a propylamine group from the amino donor S-adenosylmethioninamine (decarboxy-AdoMet) to putrescine (1,4-diaminobutane) to yield spermidine. The polypeptide is Polyamine aminopropyltransferase (Clostridium perfringens (strain SM101 / Type A)).